Reading from the N-terminus, the 316-residue chain is Ribosomal RNA large subunit methyltransferase F (316 aa).

It belongs to the methyltransferase superfamily. METTL16/RlmF family.

Its subcellular location is the cytoplasm. The catalysed reaction is adenosine(1618) in 23S rRNA + S-adenosyl-L-methionine = N(6)-methyladenosine(1618) in 23S rRNA + S-adenosyl-L-homocysteine + H(+). Specifically methylates the adenine in position 1618 of 23S rRNA. The polypeptide is Ribosomal RNA large subunit methyltransferase F (Pseudomonas putida (strain GB-1)).